A 335-amino-acid chain; its full sequence is Acetyl-coenzyme A carboxylase carboxyl transferase subunit alpha (335 aa).

Positions 48-308 (TLEKKVDALR…KGMLIEELKA (261 aa)) constitute a CoA carboxyltransferase C-terminal domain.

The protein belongs to the AccA family. As to quaternary structure, acetyl-CoA carboxylase is a heterohexamer composed of biotin carboxyl carrier protein (AccB), biotin carboxylase (AccC) and two subunits each of ACCase subunit alpha (AccA) and ACCase subunit beta (AccD).

The protein resides in the cytoplasm. The enzyme catalyses N(6)-carboxybiotinyl-L-lysyl-[protein] + acetyl-CoA = N(6)-biotinyl-L-lysyl-[protein] + malonyl-CoA. It functions in the pathway lipid metabolism; malonyl-CoA biosynthesis; malonyl-CoA from acetyl-CoA: step 1/1. In terms of biological role, component of the acetyl coenzyme A carboxylase (ACC) complex. First, biotin carboxylase catalyzes the carboxylation of biotin on its carrier protein (BCCP) and then the CO(2) group is transferred by the carboxyltransferase to acetyl-CoA to form malonyl-CoA. The polypeptide is Acetyl-coenzyme A carboxylase carboxyl transferase subunit alpha (Chlorobium luteolum (strain DSM 273 / BCRC 81028 / 2530) (Pelodictyon luteolum)).